The sequence spans 216 residues: Small ribosomal subunit protein uS3 (216 aa).

The KH type-2 domain maps to 38–106 (LRKMLKDKLY…QANIEIKEVR (69 aa)).

This sequence belongs to the universal ribosomal protein uS3 family. In terms of assembly, part of the 30S ribosomal subunit. Forms a tight complex with proteins S10 and S14.

Its function is as follows. Binds the lower part of the 30S subunit head. Binds mRNA in the 70S ribosome, positioning it for translation. This chain is Small ribosomal subunit protein uS3, found in Thermodesulfovibrio yellowstonii (strain ATCC 51303 / DSM 11347 / YP87).